The primary structure comprises 138 residues: Phospholipase A2 homolog 1 (138 aa).

Residues 1 to 16 (MRTLWIMAVLLVGVEG) form the signal peptide. Intrachain disulfides connect Cys42-Cys132, Cys44-Cys60, Cys59-Cys111, Cys65-Cys138, Cys66-Cys104, Cys73-Cys97, and Cys91-Cys102. Residues 121–134 (KKYKNNYLKPFCKK) are important for membrane-damaging activities in eukaryotes and bacteria; heparin-binding.

This sequence belongs to the phospholipase A2 family. Group II subfamily. K49 sub-subfamily. As to quaternary structure, homodimer; non-covalently linked (probable alternative/compact dimer conformation in solution). As to expression, expressed by the venom gland.

The protein resides in the secreted. Functionally, snake venom phospholipase A2 homolog that lacks enzymatic and anticoagulant activities. In mice, it induces conspicuous local myonecrosis, edema, and a systemic interleukin-6 response. In vitro, it is cytolytic upon myoblasts, and weakly bactericidal. A model of myotoxic mechanism has been proposed: an apo Lys49-PLA2 is activated by the entrance of a hydrophobic molecule (e.g. fatty acid) at the hydrophobic channel of the protein leading to a reorientation of a monomer. This reorientation causes a transition between 'inactive' to 'active' states, causing alignment of C-terminal and membrane-docking sites (MDoS) side-by-side and putting the membrane-disruption sites (MDiS) in the same plane, exposed to solvent and in a symmetric position for both monomers. The MDoS region stabilizes the toxin on membrane by the interaction of charged residues with phospholipid head groups. Subsequently, the MDiS region destabilizes the membrane with penetration of hydrophobic residues. This insertion causes a disorganization of the membrane, allowing an uncontrolled influx of ions (i.e. calcium and sodium), and eventually triggering irreversible intracellular alterations and cell death. The protein is Phospholipase A2 homolog 1 of Bothrops atrox (Barba amarilla).